The following is a 357-amino-acid chain: Chaperone protein DnaJ (357 aa).

The 66-residue stretch at 4-69 (DYYAILGVDR…QKRKQYDETG (66 aa)) folds into the J domain. The CR-type zinc-finger motif lies at 132–213 (GASKNVKYRR…CHGTGTVSKN (82 aa)). The Zn(2+) site is built by cysteine 145, cysteine 148, cysteine 161, cysteine 164, cysteine 187, cysteine 190, cysteine 201, and cysteine 204. 4 CXXCXGXG motif repeats span residues 145-152 (CEHCSGTG), 161-168 (CPTCHGSG), 187-194 (CRTCHGRG), and 201-208 (CTVCHGTG).

This sequence belongs to the DnaJ family. In terms of assembly, homodimer. It depends on Zn(2+) as a cofactor.

It is found in the cytoplasm. Functionally, participates actively in the response to hyperosmotic and heat shock by preventing the aggregation of stress-denatured proteins and by disaggregating proteins, also in an autonomous, DnaK-independent fashion. Unfolded proteins bind initially to DnaJ; upon interaction with the DnaJ-bound protein, DnaK hydrolyzes its bound ATP, resulting in the formation of a stable complex. GrpE releases ADP from DnaK; ATP binding to DnaK triggers the release of the substrate protein, thus completing the reaction cycle. Several rounds of ATP-dependent interactions between DnaJ, DnaK and GrpE are required for fully efficient folding. Also involved, together with DnaK and GrpE, in the DNA replication of plasmids through activation of initiation proteins. The polypeptide is Chaperone protein DnaJ (Picrophilus torridus (strain ATCC 700027 / DSM 9790 / JCM 10055 / NBRC 100828 / KAW 2/3)).